Consider the following 315-residue polypeptide: MSEENKQWSISDIEAIYQQPFNDLLYQAHTIHRTYHDPNSLQFATLLSIKTGACPEDCGYCSQSGHYKTHVEKEKLMSVEEVLQCAKEAKEGGAKRFCMGAAWRCPPDKAIPQLKEMIEGVKSLGLETCMTLGMLTKEQASHLKEAGLDYYNHNIDTSPSYYDKVVTTRKFSDRLDTLNNVRSAGINVCCGGILGLGETREDRIEFLLTLANMETPPESVPINRLIPVEGTPLAQAERVEGIELVRTIATARILMPKSAIRLTAGRTEMSDELQALCYFAGANSVFIGDKLLTEDNPQRFKDKTLFNKLGLTEMA.

The Radical SAM core domain maps to 39 to 266; it reads NSLQFATLLS…KSAIRLTAGR (228 aa). [4Fe-4S] cluster is bound by residues Cys-54, Cys-58, and Cys-61. The [2Fe-2S] cluster site is built by Cys-98, Cys-129, Cys-189, and Arg-261.

The protein belongs to the radical SAM superfamily. Biotin synthase family. Homodimer. The cofactor is [4Fe-4S] cluster. [2Fe-2S] cluster is required as a cofactor.

The catalysed reaction is (4R,5S)-dethiobiotin + (sulfur carrier)-SH + 2 reduced [2Fe-2S]-[ferredoxin] + 2 S-adenosyl-L-methionine = (sulfur carrier)-H + biotin + 2 5'-deoxyadenosine + 2 L-methionine + 2 oxidized [2Fe-2S]-[ferredoxin]. The protein operates within cofactor biosynthesis; biotin biosynthesis; biotin from 7,8-diaminononanoate: step 2/2. Its function is as follows. Catalyzes the conversion of dethiobiotin (DTB) to biotin by the insertion of a sulfur atom into dethiobiotin via a radical-based mechanism. This chain is Biotin synthase, found in Legionella pneumophila (strain Corby).